A 417-amino-acid chain; its full sequence is UPF0761 membrane protein CV_0810 (417 aa).

Helical transmembrane passes span 52–72 (LLALVPLFTIALSVISAFPVF), 79–99 (FKIMLLSTLVPEFAGKVITVY), 110–130 (LTAAGIVMLGVTALMLMSTIE), 150–170 (MVYWTVLTLGPLVLGGSLLSW), 185–205 (LLASVLEAGGTIVLTALVLAL), 214–234 (FVPFRHAVWGALVTSVLLELT), and 258–278 (IPIFLLWVYCLWLVVLAGAVF).

The protein belongs to the UPF0761 family.

It is found in the cell inner membrane. The chain is UPF0761 membrane protein CV_0810 from Chromobacterium violaceum (strain ATCC 12472 / DSM 30191 / JCM 1249 / CCUG 213 / NBRC 12614 / NCIMB 9131 / NCTC 9757 / MK).